We begin with the raw amino-acid sequence, 310 residues long: Porphobilinogen deaminase (310 aa).

Residue Cys242 is modified to S-(dipyrrolylmethanemethyl)cysteine.

The protein belongs to the HMBS family. Monomer. It depends on dipyrromethane as a cofactor.

It catalyses the reaction 4 porphobilinogen + H2O = hydroxymethylbilane + 4 NH4(+). Its pathway is porphyrin-containing compound metabolism; protoporphyrin-IX biosynthesis; coproporphyrinogen-III from 5-aminolevulinate: step 2/4. Tetrapolymerization of the monopyrrole PBG into the hydroxymethylbilane pre-uroporphyrinogen in several discrete steps. This is Porphobilinogen deaminase from Shewanella baltica (strain OS195).